The sequence spans 853 residues: cGMP-dependent protein kinase (853 aa).

The autoinhibitory segment stretch occupies residues 1–29; that stretch reads MEEDDNLKKGNERNKKKAIFSNDDFTGED. CNMP-binding domain regions lie at residues 58 to 173, 176 to 275, 295 to 398, and 418 to 517; these read VCST…FIDS, VFDM…IVLG, IFKQ…LGNN, and IFRY…LQII. Lysine 113, glycine 122, glutamate 123, alanine 125, arginine 132, and serine 133 together coordinate 3',5'-cyclic GMP. 3',5'-cyclic GMP contacts are provided by arginine 473, glycine 482, glutamate 483, alanine 485, arginine 492, and threonine 493. Residues 541 to 798 form the Protein kinase domain; the sequence is LETERIIGRG…FKDIKDHPFF (258 aa). Residues 547 to 555 and lysine 570 each bind ATP; that span reads IGRGTFGTV. Aspartate 664 (proton acceptor) is an active-site residue. An AGC-kinase C-terminal domain is found at 799 to 853; the sequence is SNFNWDKLAGRLLDPPLVSKSETYAEDIDIKQIEEEDAEDDEEPLNDEDNWDIDF. Residues 827–853 form a disordered region; sequence DIKQIEEEDAEDDEEPLNDEDNWDIDF. Residues 832–853 are compositionally biased toward acidic residues; that stretch reads EEEDAEDDEEPLNDEDNWDIDF.

This sequence belongs to the protein kinase superfamily. AGC Ser/Thr protein kinase family. cGMP subfamily. Monomer. It depends on Mg(2+) as a cofactor. Autophosphorylated.

The protein localises to the cytoplasm. It is found in the endoplasmic reticulum membrane. It carries out the reaction L-seryl-[protein] + ATP = O-phospho-L-seryl-[protein] + ADP + H(+). The enzyme catalyses L-threonyl-[protein] + ATP = O-phospho-L-threonyl-[protein] + ADP + H(+). Its activity is regulated as follows. Activated by cGMP. Not activated by cAMP. cGMP binding allosterically triggers a conformational change at the alpha C-helix of cGMP-binding domain 4, which bridges the regulatory and catalytic domains, causing the capping triad, composed of Arg-484, Gln-532 and Asp-533, to form and stabilize the active conformation. The cGMP-binding domains acts cooperatively to activate PKG. In terms of biological role, serine/threonine protein kinase which acts as a downstream effector of the second messenger cGMP. Controls the release of Ca(2+) from intracellular stores by regulating phosphoinositide biosynthesis. Ca(2+) signals are essential for merozoite and sporozoite invasion and egress from host hepatocytes and erythrocytes, and, in the mosquito vector, for gametocyte activation, and ookinete and sporozoite motility. During the host liver stage, regulates the initial invasion of host hepatocytes by sporozoites by regulating sporozoite motility and microneme exocytosis. Following parasite development in the hepatocytes, required for the release of merosomes, a vesicle containing the mature merozoites. During the asexual blood stage, required for the progression from schizont to the ring stage following merozoite invasion of host erythrocytes and for merozoite egress. Regulates merozoite egress by promoting the release of exonemes and micronemes which contain proteins essential for egress. Phosphorylates CDPK1 predominantly at the late schizont stage; phosphorylation at 'Ser-64' regulates CDPK1 protein-protein interaction and phosphorylation at 'Thr-231' may regulate CDPK1 kinase activity. In the mosquito vector, required for the initiation of gametogenesis induced by xanthurenic acid, specifically the gametocyte differentiation from the crescent-shaped form to the spherical form. Required for the gliding motility of ookinetes to reach and penetrate the midgut epithelium by promoting Ca(2+)-mediated activation of CDPK1 and CDPK4. Also required for microneme secretion in ookinete by promoting Ca(2+)-mediated activation of CDPK3. The polypeptide is cGMP-dependent protein kinase (Plasmodium falciparum (isolate NF54)).